The following is a 528-amino-acid chain: Tyrosine--tRNA ligase, cytoplasmic (528 aa).

Tyr-39 lines the L-tyrosine pocket. Residues 44–52 (TTGKPHVAY) carry the 'HIGH' region motif. L-tyrosine is bound by residues Tyr-166, Gln-170, Asp-173, and Gln-188. Residues 222 to 226 (KMSSS) carry the 'KMSKS' region motif. The Nuclear localization signal signature appears at 242–247 (KKKLKK). The disordered stretch occupies residues 335–364 (KLSNDAYPGASKQKTVPKGSTKNSGPEEID). Over residues 346-358 (KQKTVPKGSTKNS) the composition is skewed to polar residues. The tRNA-binding domain occupies 364-468 (DPSLLDLRVG…TGSAPGERIY (105 aa)).

Belongs to the class-I aminoacyl-tRNA synthetase family. As to quaternary structure, homodimer.

Its subcellular location is the cytoplasm. It localises to the nucleus. It carries out the reaction tRNA(Tyr) + L-tyrosine + ATP = L-tyrosyl-tRNA(Tyr) + AMP + diphosphate + H(+). Catalyzes the attachment of tyrosine to tRNA(Tyr) in a two-step reaction: tyrosine is first activated by ATP to form Tyr-AMP and then transferred to the acceptor end of tRNA(Tyr). The polypeptide is Tyrosine--tRNA ligase, cytoplasmic (yars1) (Xenopus tropicalis (Western clawed frog)).